The sequence spans 312 residues: Ornithine carbamoyltransferase (312 aa).

Carbamoyl phosphate-binding positions include 57 to 60, glutamine 84, arginine 108, and 135 to 138; these read STRT and HPCQ. L-ornithine-binding positions include asparagine 166, aspartate 226, and 230–231; that span reads SM. Residues 265-266 and arginine 293 each bind carbamoyl phosphate; that span reads CL.

Belongs to the aspartate/ornithine carbamoyltransferase superfamily. OTCase family.

Its subcellular location is the cytoplasm. The catalysed reaction is carbamoyl phosphate + L-ornithine = L-citrulline + phosphate + H(+). Its pathway is amino-acid biosynthesis; L-arginine biosynthesis; L-arginine from L-ornithine and carbamoyl phosphate: step 1/3. Its function is as follows. Reversibly catalyzes the transfer of the carbamoyl group from carbamoyl phosphate (CP) to the N(epsilon) atom of ornithine (ORN) to produce L-citrulline. The chain is Ornithine carbamoyltransferase from Brucella ovis (strain ATCC 25840 / 63/290 / NCTC 10512).